A 475-amino-acid polypeptide reads, in one-letter code: Probable pectate lyase 7 (475 aa).

The first 24 residues, M1–A24, serve as a signal peptide directing secretion. Residues N67 and N96 are each glycosylated (N-linked (GlcNAc...) asparagine). A disordered region spans residues I91–L117. Positions 271, 295, and 299 each coordinate Ca(2+). The active site involves R351.

It belongs to the polysaccharide lyase 1 family. It depends on Ca(2+) as a cofactor.

It carries out the reaction Eliminative cleavage of (1-&gt;4)-alpha-D-galacturonan to give oligosaccharides with 4-deoxy-alpha-D-galact-4-enuronosyl groups at their non-reducing ends.. Its pathway is glycan metabolism; pectin degradation; 2-dehydro-3-deoxy-D-gluconate from pectin: step 2/5. The chain is Probable pectate lyase 7 from Arabidopsis thaliana (Mouse-ear cress).